The sequence spans 663 residues: Nuclear receptor-binding protein homolog (663 aa).

Positions 1–14 are enriched in low complexity; that stretch reads MSNSQANAGSSGSA. Positions 1 to 112 are disordered; the sequence is MSNSQANAGS…SEDESEILEE (112 aa). Residues 19–46 show a composition bias toward polar residues; sequence LNPSGSATLVPNLTTTNASSQATPASTI. 2 stretches are compositionally biased toward low complexity: residues 47–57 and 81–94; these read PQQQQPQQSQP and VVVAGGSEGVNLDS. Acidic residues predominate over residues 101-111; it reads DDSEDESEILE. Residues 122 to 392 form the Protein kinase domain; that stretch reads REEVDQRDVP…ANDLLFHPLL (271 aa). Disordered stretches follow at residues 481–505 and 638–663; these read PNFRSRAASPERADSVKSATPEPVD and YVPQDQQQYQQQQQEADVDQSGTTSN. Phosphoserine occurs at positions 489, 495, and 498. Position 500 is a phosphothreonine (Thr-500). The span at 641-652 shows a compositional bias: low complexity; the sequence is QDQQQYQQQQQE.

This sequence belongs to the protein kinase superfamily. Ser/Thr protein kinase family.

It is found in the cytoplasm. Its subcellular location is the cell cortex. In terms of biological role, may play a role in subcellular trafficking between the endoplasmic reticulum and Golgi apparatus. This Drosophila pseudoobscura pseudoobscura (Fruit fly) protein is Nuclear receptor-binding protein homolog.